Consider the following 748-residue polypeptide: Translation factor GUF1 homolog 1, mitochondrial (748 aa).

Residues 1–29 (MRVGCCLLLKPIRQRLCTASISSRHIMRW) constitute a mitochondrion transit peptide. Residues 94-276 (SHIRNFAVVA…AIIERVPPPT (183 aa)) form the tr-type G domain. Residues 103–110 (AHVDHGKT), 167–171 (DTPGH), and 221–224 (TKMD) contribute to the GTP site.

This sequence belongs to the TRAFAC class translation factor GTPase superfamily. Classic translation factor GTPase family. LepA subfamily.

It is found in the mitochondrion inner membrane. The enzyme catalyses GTP + H2O = GDP + phosphate + H(+). Promotes mitochondrial protein synthesis. May act as a fidelity factor of the translation reaction, by catalyzing a one-codon backward translocation of tRNAs on improperly translocated ribosomes. Binds to mitochondrial ribosomes in a GTP-dependent manner. This is Translation factor GUF1 homolog 1, mitochondrial from Trypanosoma cruzi (strain CL Brener).